We begin with the raw amino-acid sequence, 158 residues long: Non-secretory ribonuclease (158 aa).

A signal peptide spans 1 to 27 (MVPKLFTSQICLLLLLGLSSLEVSLHA). The C-linked (Man) tryptophan glycan is linked to Trp-34. The active-site Proton acceptor is the His-42. 3'-nitrotyrosine is present on Tyr-60. 65 to 69 (KNRNT) provides a ligand contact to substrate. Asn-86, Asn-92, and Asn-111 each carry an N-linked (GlcNAc...) asparagine glycan. His-153 serves as the catalytic Proton donor.

It belongs to the pancreatic ribonuclease family. In terms of assembly, interacts with and forms a tight 1:1 complex with RNH1. Dimerization of two such complexes may occur.

It localises to the lysosome. It is found in the cytoplasmic granule. It catalyses the reaction an [RNA] containing cytidine + H2O = an [RNA]-3'-cytidine-3'-phosphate + a 5'-hydroxy-ribonucleotide-3'-[RNA].. The enzyme catalyses an [RNA] containing uridine + H2O = an [RNA]-3'-uridine-3'-phosphate + a 5'-hydroxy-ribonucleotide-3'-[RNA].. Its function is as follows. This is a non-secretory ribonuclease. It is a pyrimidine specific nuclease with a slight preference for U. Cytotoxin and helminthotoxin. Possesses a wide variety of biological activities. In Saguinus labiatus (Red-chested mustached tamarin), this protein is Non-secretory ribonuclease (RNASE2).